The primary structure comprises 166 residues: 2-amino-4-hydroxy-6-hydroxymethyldihydropteridine pyrophosphokinase (166 aa).

It belongs to the HPPK family.

It catalyses the reaction 6-hydroxymethyl-7,8-dihydropterin + ATP = (7,8-dihydropterin-6-yl)methyl diphosphate + AMP + H(+). It participates in cofactor biosynthesis; tetrahydrofolate biosynthesis; 2-amino-4-hydroxy-6-hydroxymethyl-7,8-dihydropteridine diphosphate from 7,8-dihydroneopterin triphosphate: step 4/4. Functionally, catalyzes the transfer of pyrophosphate from adenosine triphosphate (ATP) to 6-hydroxymethyl-7,8-dihydropterin, an enzymatic step in folate biosynthesis pathway. This Streptococcus pyogenes serotype M6 (strain ATCC BAA-946 / MGAS10394) protein is 2-amino-4-hydroxy-6-hydroxymethyldihydropteridine pyrophosphokinase (folK).